We begin with the raw amino-acid sequence, 292 residues long: Keratin-associated protein 10-9 (292 aa).

A run of 25 repeats spans residues Cys26–Pro30, Cys31–Ser35, Cys36–Ala40, Cys57–Thr61, Cys79–Ser83, Cys99–Val103, Cys104–Val108, Cys109–Val113, Cys114–Ser118, Cys120–Ser124, Cys130–Ser134, Cys140–Val144, Cys145–Val149, Cys150–Thr154, Cys162–Ser166, Cys172–Ser176, Tyr182–Val186, Cys187–Val191, Cys192–Ile196, Cys197–Val201, Cys209–Ser213, Cys219–Ser223, Cys224–Ser228, Cys243–Val247, and Cys250–Thr254. The 25 X 5 AA repeats of C-C-X(3) stretch occupies residues Cys26 to Thr254.

It belongs to the KRTAP type 10 family. In terms of assembly, interacts with hair keratins. Restricted to a narrow region of the hair fiber cuticle, lying approximately 20 cell layers above the apex of the dermal papilla of the hair root; not detected in any other tissues.

Functionally, in the hair cortex, hair keratin intermediate filaments are embedded in an interfilamentous matrix, consisting of hair keratin-associated proteins (KRTAP), which are essential for the formation of a rigid and resistant hair shaft through their extensive disulfide bond cross-linking with abundant cysteine residues of hair keratins. The matrix proteins include the high-sulfur and high-glycine-tyrosine keratins. This chain is Keratin-associated protein 10-9 (KRTAP10-9), found in Homo sapiens (Human).